The following is a 237-amino-acid chain: (5-formylfuran-3-yl)methyl phosphate synthase (237 aa).

Residue K29 is the Schiff-base intermediate with substrate of the active site. The Proton acceptor role is filled by K87.

The protein belongs to the MfnB family.

It catalyses the reaction 2 D-glyceraldehyde 3-phosphate = 4-(hydroxymethyl)-2-furancarboxaldehyde phosphate + phosphate + 2 H2O. Its pathway is cofactor biosynthesis; methanofuran biosynthesis. Functionally, catalyzes the formation of 4-(hydroxymethyl)-2-furancarboxaldehyde phosphate (4-HFC-P) from two molecules of glyceraldehyde-3-P (GA-3-P). This is (5-formylfuran-3-yl)methyl phosphate synthase from Methanopyrus kandleri (strain AV19 / DSM 6324 / JCM 9639 / NBRC 100938).